A 532-amino-acid polypeptide reads, in one-letter code: Sodium-dependent lysophosphatidylcholine symporter 1-A (532 aa).

The Cytoplasmic portion of the chain corresponds to 1–40 (MARGEGAEQFSSGLLPTAKSVTQNEIKMVKLPKQQERKRA). The chain crosses the membrane as a helical span at residues 41 to 70 (LTVWSKVCFAIGGAPYQITGTALGFFLQIF). The Extracellular portion of the chain corresponds to 71 to 81 (LLDVAQLNPLN). A helical membrane pass occupies residues 82–102 (ASVILFVGRAWDAVTDPTVGF). Topologically, residues 103–114 (LVSRTPWTRHGR) are cytoplasmic. The chain crosses the membrane as a helical span at residues 115 to 134 (MMPWILVSTIPAVLCYFLIW). Over 135–144 (VVPPIEQGKM) the chain is Extracellular. The helical transmembrane segment at 145 to 169 (MWYLLFYCLFQTLQTCFHVPYSALT) threads the bilayer. Residues 170-176 (MFISTEQ) lie on the Cytoplasmic side of the membrane. The helical transmembrane segment at 177 to 208 (RERDSATAYRMTVEVFGTVVGTAIQGQIVGMA) threads the bilayer. The Extracellular segment spans residues 209–232 (NTPCKNNTSPNNSSNDLIQSNNSH). Cysteine 212 and cysteine 464 form a disulfide bridge. Residues asparagine 214, asparagine 220, and asparagine 229 are each glycosylated (N-linked (GlcNAc...) asparagine). The helical transmembrane segment at 233-266 (IPLKSNIFDERCAYMIASAVISLIYVVCAAVLFF) threads the bilayer. At 267–297 (GVREQDVQGELKAQKRVSFQKGLRLVMGHGP) the chain is on the cytoplasmic side. The chain crosses the membrane as a helical span at residues 298–324 (YVKLVLAFLFTSLAFMLLEGNFAVFIK). Over 325–335 (YTLGFREDFQN) the chain is Extracellular. Residues 336–354 (ILLVIMVSATVSIPMWQWF) traverse the membrane as a helical segment. Residues 355-358 (LCRF) are Cytoplasmic-facing. The chain crosses the membrane as a helical span at residues 359–380 (GKKTAVYIGITWAVPFMILVVS). The Extracellular portion of the chain corresponds to 381–383 (VNS). The chain crosses the membrane as a helical span at residues 384–420 (SLIVSYIVSIAAGVSVGAAFLLPWSMLPDVVDDFKLQ). Residues 421-430 (NPTSQGHEAI) lie on the Cytoplasmic side of the membrane. A helical transmembrane segment spans residues 431 to 457 (FYSFYVFFTKFASGVSLGVSTLALSFA). Over 458 to 469 (GYETGVCVQSDS) the chain is Extracellular. A helical membrane pass occupies residues 470 to 493 (VNLTLKLLVSAAPVSLIALGLLIF). Residues 494–532 (MTYPIDEERREYNNKQLQLLLRNEEEEDEMEVLKPDITA) lie on the Cytoplasmic side of the membrane.

Belongs to the major facilitator superfamily. In terms of tissue distribution, expressed in the developing nervous system.

Its subcellular location is the cell membrane. The protein resides in the endoplasmic reticulum membrane. It catalyses the reaction a 1-acyl-sn-glycero-3-phosphocholine(in) + Na(+)(in) = a 1-acyl-sn-glycero-3-phosphocholine(out) + Na(+)(out). It carries out the reaction 1-(4Z,7Z,10Z,13Z,16Z,19Z-docosahexaenoyl)-sn-glycero-3-phosphocholine(in) + Na(+)(in) = 1-(4Z,7Z,10Z,13Z,16Z,19Z-docosahexaenoyl)-sn-glycero-3-phosphocholine(out) + Na(+)(out). The enzyme catalyses 1-(9Z-octadecenoyl)-sn-glycero-3-phosphocholine(in) + Na(+)(in) = 1-(9Z-octadecenoyl)-sn-glycero-3-phosphocholine(out) + Na(+)(out). The catalysed reaction is 1-hexadecanoyl-sn-glycero-3-phosphocholine(in) + Na(+)(in) = 1-hexadecanoyl-sn-glycero-3-phosphocholine(out) + Na(+)(out). It catalyses the reaction a 1-acyl-sn-glycero-3-phosphoethanolamine(in) + Na(+)(in) = a 1-acyl-sn-glycero-3-phosphoethanolamine(out) + Na(+)(out). Sodium-dependent lysophosphatidylcholine (LPC) symporter, which plays an essential role for blood-brain barrier formation and function. Specifically expressed in endothelium of the blood-brain barrier of micro-vessels and transports LPC into the brain. Transport of LPC is essential because it constitutes the major mechanism by which docosahexaenoic acid (DHA), an omega-3 fatty acid that is essential for normal brain growth and cognitive function, enters the brain. Transports LPC carrying long-chain fatty acids such LPC oleate and LPC palmitate with a minimum acyl chain length of 14 carbons. Does not transport docosahexaenoic acid in unesterified fatty acid. The chain is Sodium-dependent lysophosphatidylcholine symporter 1-A (mfsd2aa) from Danio rerio (Zebrafish).